A 140-amino-acid polypeptide reads, in one-letter code: VapC ribonuclease Y4jK (140 aa).

Residues 2–135 enclose the PINc domain; the sequence is IVLDTNVISE…FEAAGLDIIN (134 aa). Mg(2+) contacts are provided by D5 and D104.

Belongs to the PINc/VapC protein family. It depends on Mg(2+) as a cofactor.

In terms of biological role, toxic component of a type II toxin-antitoxin (TA) system. An RNase. Involved in plasmid stability. This Sinorhizobium fredii (strain NBRC 101917 / NGR234) protein is VapC ribonuclease Y4jK.